The chain runs to 324 residues: Glyoxylate/hydroxypyruvate reductase B (324 aa).

Catalysis depends on residues Arg237 and Glu266. His285 serves as the catalytic Proton donor.

The protein belongs to the D-isomer specific 2-hydroxyacid dehydrogenase family. GhrB subfamily. As to quaternary structure, homodimer.

It localises to the cytoplasm. The catalysed reaction is glycolate + NADP(+) = glyoxylate + NADPH + H(+). It catalyses the reaction (R)-glycerate + NAD(+) = 3-hydroxypyruvate + NADH + H(+). It carries out the reaction (R)-glycerate + NADP(+) = 3-hydroxypyruvate + NADPH + H(+). Functionally, catalyzes the NADPH-dependent reduction of glyoxylate and hydroxypyruvate into glycolate and glycerate, respectively. This Escherichia coli (strain ATCC 8739 / DSM 1576 / NBRC 3972 / NCIMB 8545 / WDCM 00012 / Crooks) protein is Glyoxylate/hydroxypyruvate reductase B.